Consider the following 430-residue polypeptide: RNA polymerase-associated protein LEO1 (430 aa).

Residues methionine 1 to alanine 10 show a composition bias toward polar residues. The disordered stretch occupies residues methionine 1–glycine 128. Residues lysine 18–aspartate 30 show a composition bias toward low complexity. Positions arginine 99 to serine 119 are enriched in basic and acidic residues. Coiled coils occupy residues threonine 326–methionine 347 and glutamate 409–serine 429. Residues arginine 349–aspartate 430 are disordered.

Belongs to the LEO1 family. As to quaternary structure, component of the PAF1 complex which consists of at least cdc-73, ctr-9, leo-1, pafo-1 and rtfo-1.

Its subcellular location is the nucleus. It localises to the cytoplasm. Its function is as follows. Component of the PAF1 complex which is a multifunctional complex involved in transcription initiation via genetic interactions with TATA-binding proteins, elongation and transcription-coupled histone modification. In Caenorhabditis elegans, this protein is RNA polymerase-associated protein LEO1.